The primary structure comprises 223 residues: Small ribosomal subunit protein uS3 (223 aa).

The region spanning Ile39 to Lys108 is the KH type-2 domain.

The protein belongs to the universal ribosomal protein uS3 family. Part of the 30S ribosomal subunit. Forms a tight complex with proteins S10 and S14.

Functionally, binds the lower part of the 30S subunit head. Binds mRNA in the 70S ribosome, positioning it for translation. The protein is Small ribosomal subunit protein uS3 of Clostridium botulinum (strain 657 / Type Ba4).